The following is a 359-amino-acid chain: tRNA-specific 2-thiouridylase MnmA (359 aa).

Residues 7–14 (GLSGGVDS) and Leu-33 contribute to the ATP site. Cys-94 functions as the Nucleophile in the catalytic mechanism. A disulfide bond links Cys-94 and Cys-193. Gly-119 contacts ATP. Positions 143–145 (KDQ) are interaction with tRNA. Cys-193 acts as the Cysteine persulfide intermediate in catalysis. The tract at residues 298–299 (RY) is interaction with tRNA.

It belongs to the MnmA/TRMU family.

The protein localises to the cytoplasm. The enzyme catalyses S-sulfanyl-L-cysteinyl-[protein] + uridine(34) in tRNA + AH2 + ATP = 2-thiouridine(34) in tRNA + L-cysteinyl-[protein] + A + AMP + diphosphate + H(+). Catalyzes the 2-thiolation of uridine at the wobble position (U34) of tRNA, leading to the formation of s(2)U34. This is tRNA-specific 2-thiouridylase MnmA from Trichodesmium erythraeum (strain IMS101).